The chain runs to 479 residues: POU domain, class 2, transcription factor 2 (479 aa).

Disordered regions lie at residues 1–86 (MVHS…AQPH), 166–200 (TQAV…PSDL), 275–298 (SSLP…GRRR), 357–393 (PCSA…SQAS), and 409–479 (TLHP…PYQP). The span at 12–37 (RMSKPLEAEKQGLDSPSEHTDTERNG) shows a compositional bias: basic and acidic residues. Residues 38 to 60 (PDTNHQNPQNKTSPFSVSPTGPS) show a composition bias toward polar residues. Positions 76–85 (APLPPQPAQP) are enriched in pro residues. The region spanning 195-269 (EEPSDLEELE…LLEKWLNDAE (75 aa)) is the POU-specific domain. Low complexity predominate over residues 275-288 (SSLPSPNQLSSPSL). A DNA-binding region (homeobox) is located at residues 297 to 356 (RRKKRTSIETNVRFALEKSFLANQKPTSEEILLIAEQLHMEKEVIRVWFCNRRQKEKRIN). The tract at residues 389–410 (LSQASSSLSTTVTTLSSAVGTL) is leucine-zipper. Residues 416 to 425 (AGGGGGGGGA) show a composition bias toward gly residues.

Belongs to the POU transcription factor family. Class-2 subfamily. In terms of assembly, interacts with NR3C1, AR and PGR. Interacts with POU2AF1; the interaction increases POU2F2 transactivation activity. In terms of tissue distribution, isoform 3 is B-cell specific. Isoform 5 is expressed in B-cells and the immunoglobulin-expressing T-cell line MOLT-4, but not in the T-cell line BW5147.

It is found in the cytoplasm. The protein localises to the nucleus. Its activity is regulated as follows. Transactivation activity is enhanced by transcriptional coactivator POU2AF1. In terms of biological role, transcription factor that specifically binds to the octamer motif (5'-ATTTGCAT-3'). Regulates IL6 expression in B cells with POU2AF1. Regulates transcription in a number of tissues in addition to activating immunoglobulin gene expression. Modulates transcription transactivation by NR3C1, AR and PGR. Functionally, activates the U2 small nuclear RNA (snRNA) promoter. This is POU domain, class 2, transcription factor 2 from Homo sapiens (Human).